The chain runs to 158 residues: Putative cTAGE family member 3 (158 aa).

The stretch at Gln26–Asp96 forms a coiled coil.

It belongs to the cTAGE family. In terms of tissue distribution, expressed in normal tissues including colon, mammary gland, ovary, placenta, stomach and testis, as well as several fetal tissues.

In terms of biological role, tumor-associated antigen. This Homo sapiens (Human) protein is Putative cTAGE family member 3 (CTAGE3P).